The sequence spans 313 residues: Ribosomal RNA small subunit methyltransferase H (313 aa).

S-adenosyl-L-methionine contacts are provided by residues Gly35 to His37, Asp55, Phe79, Asp101, and Gln108.

Belongs to the methyltransferase superfamily. RsmH family.

It localises to the cytoplasm. It catalyses the reaction cytidine(1402) in 16S rRNA + S-adenosyl-L-methionine = N(4)-methylcytidine(1402) in 16S rRNA + S-adenosyl-L-homocysteine + H(+). Its function is as follows. Specifically methylates the N4 position of cytidine in position 1402 (C1402) of 16S rRNA. This Salmonella arizonae (strain ATCC BAA-731 / CDC346-86 / RSK2980) protein is Ribosomal RNA small subunit methyltransferase H.